Reading from the N-terminus, the 1024-residue chain is Isoleucine--tRNA ligase (1024 aa).

The short motif at 52 to 62 is the 'HIGH' region element; that stretch reads PTANGRPHVGH. A 'KMSKS' region motif is present at residues 590–594; the sequence is KMSKS. K593 is a binding site for ATP.

Belongs to the class-I aminoacyl-tRNA synthetase family. IleS type 2 subfamily. Monomer. It depends on Zn(2+) as a cofactor.

It is found in the cytoplasm. It catalyses the reaction tRNA(Ile) + L-isoleucine + ATP = L-isoleucyl-tRNA(Ile) + AMP + diphosphate. Its function is as follows. Catalyzes the attachment of isoleucine to tRNA(Ile). As IleRS can inadvertently accommodate and process structurally similar amino acids such as valine, to avoid such errors it has two additional distinct tRNA(Ile)-dependent editing activities. One activity is designated as 'pretransfer' editing and involves the hydrolysis of activated Val-AMP. The other activity is designated 'posttransfer' editing and involves deacylation of mischarged Val-tRNA(Ile). The chain is Isoleucine--tRNA ligase from Picrophilus torridus (strain ATCC 700027 / DSM 9790 / JCM 10055 / NBRC 100828 / KAW 2/3).